Consider the following 186-residue polypeptide: Putative manganese efflux pump MntP (186 aa).

A run of 6 helical transmembrane segments spans residues 5–25, 41–61, 72–92, 107–127, 135–155, and 166–186; these read VLIGEILTLSMMAFALGMDAF, VFQIGVIIGLFHVIMPLGGMI, ALAGYIGGALLLVLGIQMIVA, FGLFVFAVGVSLDSFSVGLSL, ILTIFLFGLFSMVLTWAGLLL, and YSEALGGAILLSFGLKLLLPI.

Belongs to the MntP (TC 9.B.29) family.

It localises to the cell membrane. Probably functions as a manganese efflux pump. This Bacillus licheniformis (strain ATCC 14580 / DSM 13 / JCM 2505 / CCUG 7422 / NBRC 12200 / NCIMB 9375 / NCTC 10341 / NRRL NRS-1264 / Gibson 46) protein is Putative manganese efflux pump MntP.